The primary structure comprises 224 residues: 7-cyano-7-deazaguanine synthase (224 aa).

9–19 serves as a coordination point for ATP; that stretch reads ISGGMDSTLCA. C190, C198, C201, and C204 together coordinate Zn(2+).

The protein belongs to the QueC family. It depends on Zn(2+) as a cofactor.

It catalyses the reaction 7-carboxy-7-deazaguanine + NH4(+) + ATP = 7-cyano-7-deazaguanine + ADP + phosphate + H2O + H(+). It functions in the pathway purine metabolism; 7-cyano-7-deazaguanine biosynthesis. Catalyzes the ATP-dependent conversion of 7-carboxy-7-deazaguanine (CDG) to 7-cyano-7-deazaguanine (preQ(0)). This is 7-cyano-7-deazaguanine synthase from Campylobacter jejuni (strain RM1221).